Reading from the N-terminus, the 563-residue chain is Coiled-coil domain-containing protein 63 (563 aa).

Positions 1-29 (MSVLKKNRRKDSDTPQEPSEKAKEQQAEA) are disordered. Over residues 10–29 (KDSDTPQEPSEKAKEQQAEA) the composition is skewed to basic and acidic residues. Coiled coils occupy residues 18–201 (PSEK…QLQH), 233–291 (AMKD…AKKH), and 341–422 (TELN…KKIN).

In terms of biological role, plays a role in spermiogenesis. Involved in the elongation of flagella and the formation of sperm heads. The sequence is that of Coiled-coil domain-containing protein 63 from Homo sapiens (Human).